Here is a 222-residue protein sequence, read N- to C-terminus: Probable RNA 2'-phosphotransferase (222 aa).

It belongs to the KptA/TPT1 family.

Functionally, removes the 2'-phosphate from RNA via an intermediate in which the phosphate is ADP-ribosylated by NAD followed by a presumed transesterification to release the RNA and generate ADP-ribose 1''-2''-cyclic phosphate (APPR&gt;P). May function as an ADP-ribosylase. This Haloarcula marismortui (strain ATCC 43049 / DSM 3752 / JCM 8966 / VKM B-1809) (Halobacterium marismortui) protein is Probable RNA 2'-phosphotransferase.